Consider the following 80-residue polypeptide: ATP synthase F(1) complex subunit delta, mitochondrial (80 aa).

Residues 1-22 (MLPATLLRXSGLGRVVRQARAY) constitute a mitochondrion transit peptide.

Belongs to the ATPase epsilon chain family. As to quaternary structure, component of the ATP synthase complex composed at least of ATP5F1A/subunit alpha, ATP5F1B/subunit beta, ATP5MC1/subunit c (homooctomer), MT-ATP6/subunit a, MT-ATP8/subunit 8, ATP5ME/subunit e, ATP5MF/subunit f, ATP5MG/subunit g, ATP5MK/subunit k, ATP5MJ/subunit j, ATP5F1C/subunit gamma, ATP5F1D/subunit delta, ATP5F1E/subunit epsilon, ATP5PF/subunit F6, ATP5PB/subunit b, ATP5PD/subunit d, ATP5PO/subunit OSCP. ATP synthase complex consists of a soluble F(1) head domain (subunits alpha(3) and beta(3)) - the catalytic core - and a membrane F(0) domain - the membrane proton channel (subunits c, a, 8, e, f, g, k and j). These two domains are linked by a central stalk (subunits gamma, delta, and epsilon) rotating inside the F1 region and a stationary peripheral stalk (subunits F6, b, d, and OSCP). Component of a complex composed at least by ATPIF1, ATP5F1A, ATP5F1B, ATP5F1C AND ATP5F1E.

The protein resides in the mitochondrion. The protein localises to the mitochondrion inner membrane. Subunit delta, of the mitochondrial membrane ATP synthase complex (F(1)F(0) ATP synthase or Complex V) that produces ATP from ADP in the presence of a proton gradient across the membrane which is generated by electron transport complexes of the respiratory chain. ATP synthase complex consist of a soluble F(1) head domain - the catalytic core - and a membrane F(1) domain - the membrane proton channel. These two domains are linked by a central stalk rotating inside the F(1) region and a stationary peripheral stalk. During catalysis, ATP synthesis in the catalytic domain of F(1) is coupled via a rotary mechanism of the central stalk subunits to proton translocation. In vivo, can only synthesize ATP although its ATP hydrolase activity can be activated artificially in vitro. With the central stalk subunit gamma, is essential for the biogenesis of F(1) catalytic part of the ATP synthase complex namely in the formation of F1 assembly intermediate. In Sus scrofa (Pig), this protein is ATP synthase F(1) complex subunit delta, mitochondrial.